Reading from the N-terminus, the 228-residue chain is CD302 antigen (228 aa).

The first 20 residues, 1–20 (MPHAALSSLVLLSLATAIFA), serve as a signal peptide directing secretion. Over 21-165 (DCPSSIWVQF…YDKKYLSDNH (145 aa)) the chain is Extracellular. One can recognise a C-type lectin domain in the interval 30-149 (FQGSCYTFLQ…CEMSSVTGTL (120 aa)). Asn-107 is a glycosylation site (N-linked (GlcNAc...) asparagine). A disulfide bridge connects residues Cys-125 and Cys-140. The chain crosses the membrane as a helical span at residues 166–186 (ILISTLVIASTVTLAVLGAVI). Residues 187–228 (WFLYRRSARSGFTSFSPAPQSPYSDGCALVVSEEDEYSVQLD) lie on the Cytoplasmic side of the membrane.

It localises to the membrane. Its subcellular location is the cell projection. The protein resides in the filopodium. The protein localises to the cytoplasm. It is found in the cell cortex. It localises to the microvillus. Potential multifunctional C-type lectin receptor that may play roles in endocytosis and phagocytosis as well as in cell adhesion and migration. The protein is CD302 antigen (Cd302) of Rattus norvegicus (Rat).